Consider the following 1607-residue polypeptide: Dicer-like protein 1 (1607 aa).

Positions 1-74 (MNAEMREGSS…PDTKKWIVND (74 aa)) are disordered. The 183-residue stretch at 142–324 (LFERAKTQNT…IARSPELEGL (183 aa)) folds into the Helicase ATP-binding domain. Position 155–162 (155–162 (LDTGSGKT)) interacts with ATP. The short motif at 267-270 (DEAH) is the DEAH box element. Positions 461 to 632 (KVVILLRILR…EALPADRKLT (172 aa)) constitute a Helicase C-terminal domain. Residues 665 to 755 (SLICLAAFVA…RPTFTKQLPA (91 aa)) enclose the Dicer dsRNA-binding fold domain. The PAZ domain maps to 905-1040 (GAVTFVRDNE…IVLEPLRISP (136 aa)). 2 consecutive RNase III domains span residues 1063–1219 (LVAL…LTAQ) and 1272–1447 (AARF…VDSR). Mg(2+) is bound by residues Glu1312, Asp1433, and Glu1436. One can recognise a DRBM domain in the interval 1478–1556 (HPVTFLAGIM…AKKAIQVLEG (79 aa)). Zn(2+) is bound by residues Cys1493, His1527, Cys1568, and Cys1570.

It belongs to the helicase family. Dicer subfamily. Mg(2+) is required as a cofactor. Requires Mn(2+) as cofactor.

In terms of biological role, dicer-like endonuclease involved in cleaving double-stranded RNA in the RNA interference (RNAi) pathway. Produces 21 to 25 bp dsRNAs (siRNAs) which target the selective destruction of homologous RNAs leading to sequence-specific suppression of gene expression, called post-transcriptional gene silencing (PTGS). Part of a broad host defense response against viral infection and transposons. The protein is Dicer-like protein 1 (DCL1) of Chaetomium globosum (strain ATCC 6205 / CBS 148.51 / DSM 1962 / NBRC 6347 / NRRL 1970) (Soil fungus).